A 215-amino-acid polypeptide reads, in one-letter code: Cytochrome b6 (215 aa).

Residues Ile-32–Phe-52 form a helical membrane-spanning segment. A heme c-binding site is contributed by Cys-35. Heme b is bound by residues His-86 and His-100. The next 3 helical transmembrane spans lie at Ala-90–Phe-110, Leu-116–Tyr-136, and Leu-186–Ile-206. Heme b-binding residues include His-187 and His-202.

The protein belongs to the cytochrome b family. PetB subfamily. The 4 large subunits of the cytochrome b6-f complex are cytochrome b6, subunit IV (17 kDa polypeptide, PetD), cytochrome f and the Rieske protein, while the 4 small subunits are PetG, PetL, PetM and PetN. The complex functions as a dimer. The cofactor is heme b. It depends on heme c as a cofactor.

The protein resides in the plastid. The protein localises to the chloroplast thylakoid membrane. Component of the cytochrome b6-f complex, which mediates electron transfer between photosystem II (PSII) and photosystem I (PSI), cyclic electron flow around PSI, and state transitions. The protein is Cytochrome b6 of Coleochaete orbicularis (Charophycean green alga).